The following is a 201-amino-acid chain: Peptide deformylase (201 aa).

A disordered region spans residues 1–24; it reads MANHFSQLAKKSKTNGNSEKIAKE. Residues Cys-121 and His-163 each coordinate Fe cation. Residue Glu-164 is part of the active site. His-167 contributes to the Fe cation binding site.

Belongs to the polypeptide deformylase family. The cofactor is Fe(2+).

It catalyses the reaction N-terminal N-formyl-L-methionyl-[peptide] + H2O = N-terminal L-methionyl-[peptide] + formate. Its function is as follows. Removes the formyl group from the N-terminal Met of newly synthesized proteins. Requires at least a dipeptide for an efficient rate of reaction. N-terminal L-methionine is a prerequisite for activity but the enzyme has broad specificity at other positions. This is Peptide deformylase from Prochlorococcus marinus (strain MIT 9312).